Reading from the N-terminus, the 160-residue chain is GTP-dependent dephospho-CoA kinase (160 aa).

7 residues coordinate GTP: D45, I46, V47, D59, K61, E108, and D130.

The protein belongs to the GTP-dependent DPCK family.

It catalyses the reaction 3'-dephospho-CoA + GTP = GDP + CoA + H(+). The protein operates within cofactor biosynthesis; coenzyme A biosynthesis. Functionally, catalyzes the GTP-dependent phosphorylation of the 3'-hydroxyl group of dephosphocoenzyme A to form coenzyme A (CoA). This Staphylothermus marinus (strain ATCC 43588 / DSM 3639 / JCM 9404 / F1) protein is GTP-dependent dephospho-CoA kinase.